A 381-amino-acid polypeptide reads, in one-letter code: Succinyl-diaminopimelate desuccinylase (381 aa).

His-68 contacts Zn(2+). Asp-70 is an active-site residue. Zn(2+) is bound at residue Asp-101. Glu-135 acts as the Proton acceptor in catalysis. Residues Glu-136, Glu-164, and His-350 each coordinate Zn(2+).

Belongs to the peptidase M20A family. DapE subfamily. Homodimer. The cofactor is Zn(2+). It depends on Co(2+) as a cofactor.

It catalyses the reaction N-succinyl-(2S,6S)-2,6-diaminopimelate + H2O = (2S,6S)-2,6-diaminopimelate + succinate. The protein operates within amino-acid biosynthesis; L-lysine biosynthesis via DAP pathway; LL-2,6-diaminopimelate from (S)-tetrahydrodipicolinate (succinylase route): step 3/3. In terms of biological role, catalyzes the hydrolysis of N-succinyl-L,L-diaminopimelic acid (SDAP), forming succinate and LL-2,6-diaminopimelate (DAP), an intermediate involved in the bacterial biosynthesis of lysine and meso-diaminopimelic acid, an essential component of bacterial cell walls. The protein is Succinyl-diaminopimelate desuccinylase of Neisseria meningitidis serogroup A / serotype 4A (strain DSM 15465 / Z2491).